A 280-amino-acid polypeptide reads, in one-letter code: Protoheme IX farnesyltransferase 2 (280 aa).

9 consecutive transmembrane segments (helical) span residues 12–32 (VIWL…GGVD), 35–55 (LFSL…FNHY), 76–96 (LITP…GISL), 98–118 (FLLL…FYAV), 129–149 (WLNI…GYAL), 158–178 (AVLI…ALAF), 199–221 (ERAV…WLYL), 226–248 (GAGG…YAAV), and 255–275 (MWKM…ALMI).

This sequence belongs to the UbiA prenyltransferase family. Protoheme IX farnesyltransferase subfamily.

The protein resides in the cell membrane. It carries out the reaction heme b + (2E,6E)-farnesyl diphosphate + H2O = Fe(II)-heme o + diphosphate. It participates in porphyrin-containing compound metabolism; heme O biosynthesis; heme O from protoheme: step 1/1. In terms of biological role, converts heme B (protoheme IX) to heme O by substitution of the vinyl group on carbon 2 of heme B porphyrin ring with a hydroxyethyl farnesyl side group. In Pyrobaculum aerophilum (strain ATCC 51768 / DSM 7523 / JCM 9630 / CIP 104966 / NBRC 100827 / IM2), this protein is Protoheme IX farnesyltransferase 2.